We begin with the raw amino-acid sequence, 61 residues long: Putative neurotoxin-A (61 aa).

The signal sequence occupies residues 1 to 19 (MKTVCGVFMVLLALTVLLA). 3 disulfide bridges follow: cysteine 31/cysteine 50, cysteine 36/cysteine 55, and cysteine 40/cysteine 57.

It belongs to the short scorpion toxin superfamily. In terms of tissue distribution, expressed by the venom gland.

It localises to the secreted. This chain is Putative neurotoxin-A, found in Lychas mucronatus (Chinese swimming scorpion).